A 340-amino-acid chain; its full sequence is Deubiquitinase SseL (340 aa).

The active site involves histidine 223. The active-site Nucleophile is the cysteine 285.

Belongs to the peptidase C79 family.

The protein resides in the secreted. The protein localises to the host cytoplasm. Its function is as follows. Effector proteins function to alter host cell physiology and promote bacterial survival in host tissues. This protease targets the host cell ubiquitin pathway by acting as a deubiquitinase in infected host cells. The sequence is that of Deubiquitinase SseL (sseL) from Salmonella paratyphi A (strain ATCC 9150 / SARB42).